We begin with the raw amino-acid sequence, 705 residues long: Phosphatidylinositol 4-phosphate 5-kinase 3 (705 aa).

MORN repeat units follow at residues tyrosine 58–methionine 80, tyrosine 81–threonine 103, tyrosine 104–threonine 126, tyrosine 127–glycine 149, tyrosine 150–glutamate 172, tyrosine 173–arginine 195, and tyrosine 196–threonine 218. The region spanning threonine 321–phenylalanine 701 is the PIPK domain. Positions tyrosine 661–serine 682 are activation loop.

It is found in the cell membrane. The catalysed reaction is a 1,2-diacyl-sn-glycero-3-phospho-(1D-myo-inositol 4-phosphate) + ATP = a 1,2-diacyl-sn-glycero-3-phospho-(1D-myo-inositol-4,5-bisphosphate) + ADP + H(+). Functionally, with DRP1A and DRP2B, required for the precise coordination of polar ARAC3/ROP6 and ARAC4/ROP2 placement and subsequent root hair positioning during planar polarity formation in root hair-forming cells, probably by mediating the correct basal-to-planar polarity switching of D6PK into the polar, lipid-enriched domain. This Arabidopsis thaliana (Mouse-ear cress) protein is Phosphatidylinositol 4-phosphate 5-kinase 3.